The primary structure comprises 365 residues: Mitogen-activated protein kinase HOG1 (365 aa).

The Protein kinase domain maps to 20 to 306 (YSDLQPVGMG…ATNALAHEYL (287 aa)). Residues 26–34 (VGMGAFGLV) and lysine 49 contribute to the ATP site. Residue aspartate 148 is the Proton acceptor of the active site. Positions 178-180 (TGY) match the TXY motif.

It belongs to the protein kinase superfamily. Ser/Thr protein kinase family. MAP kinase subfamily. HOG1 sub-subfamily. Requires Mg(2+) as cofactor.

Its subcellular location is the cytoplasm. It is found in the nucleus. The catalysed reaction is L-seryl-[protein] + ATP = O-phospho-L-seryl-[protein] + ADP + H(+). It catalyses the reaction L-threonyl-[protein] + ATP = O-phospho-L-threonyl-[protein] + ADP + H(+). Its function is as follows. Proline-directed serine/threonine-protein kinase involved in a signal transduction pathway that is activated by changes in the osmolarity of the extracellular environment. Controls osmotic regulation of transcription of target genes. Involved in environmental stress response, hyphal growth, conidiation and possibly secondary metabolism such as ustiloxin biosynthesis or the biosynthesis of other phytotoxic compounds that are inhibitory to rice shoot growth during seed germination. Plays a key role in responses to cell wall and membrane stresses but not oxidative stress. In Ustilaginoidea virens (Rice false smut fungus), this protein is Mitogen-activated protein kinase HOG1.